A 409-amino-acid polypeptide reads, in one-letter code: Casein kinase II subunit alpha-1 (409 aa).

The first 35 residues, 1 to 35 (MIDTLFFLFFLFFDSPLRRLLLLCAVLALRAPTAH), serve as a signal peptide directing secretion. A glycan (N-linked (GlcNAc...) asparagine) is linked at N72. The 286-residue stretch at 110 to 395 (YEVVRKVGRG…AKEAMAHAYF (286 aa)) folds into the Protein kinase domain. Residues 116–124 (VGRGKYSEV) and K139 contribute to the ATP site. The N-linked (GlcNAc...) asparagine glycan is linked to N188. The active-site Proton acceptor is the D227.

Belongs to the protein kinase superfamily. Ser/Thr protein kinase family. CK2 subfamily. In terms of assembly, heterotetramer of two catalytic alpha subunits and two regulatory beta subunits. Seems to be present in all plant organs. But seems to be less expressed than CKA2.

The protein resides in the nucleus. It localises to the nucleolus. The enzyme catalyses L-seryl-[protein] + ATP = O-phospho-L-seryl-[protein] + ADP + H(+). It catalyses the reaction L-threonyl-[protein] + ATP = O-phospho-L-threonyl-[protein] + ADP + H(+). Its activity is regulated as follows. Inhibited by heparin. Functionally, casein kinases are operationally defined by their preferential utilization of acidic proteins such as caseins as substrates. Phosphorylates casein in vitro. The alpha chain contains the catalytic site. The tetrameric holoenzyme CK2, composed of two alpha and two beta subunits, phosphorylates the transcription factor GBFl, resulting in stimulation of its DNA binding activity. CK2 phosphorylates the transcription factor PIF1 after an exposure to light, resulting in a proteasome-dependent degradation of PIF1 and promotion of photomorphogenesis. CK2 phosphorylates translation initiation factors. May participate in the regulation of the initiation of translation. Acts as a circadian clock component that maintains the correct period length through phosphorylation of CCA1. Required for the maintenance and control of genomic stability and chromatin structure. May act as an ectokinase that phosphorylates several extracellular proteins. In Arabidopsis thaliana (Mouse-ear cress), this protein is Casein kinase II subunit alpha-1.